A 174-amino-acid polypeptide reads, in one-letter code: UPF0113 protein AF_0058 (174 aa).

Residues 87-161 enclose the PUA domain; it reads RNRVWVNERG…KVFVENLVDR (75 aa).

It belongs to the UPF0113 family.

The protein is UPF0113 protein AF_0058 of Archaeoglobus fulgidus (strain ATCC 49558 / DSM 4304 / JCM 9628 / NBRC 100126 / VC-16).